The following is a 299-amino-acid chain: Elongation factor Ts (299 aa).

The tract at residues 81–84 (TDFV) is involved in Mg(2+) ion dislocation from EF-Tu.

This sequence belongs to the EF-Ts family.

The protein localises to the cytoplasm. Functionally, associates with the EF-Tu.GDP complex and induces the exchange of GDP to GTP. It remains bound to the aminoacyl-tRNA.EF-Tu.GTP complex up to the GTP hydrolysis stage on the ribosome. The polypeptide is Elongation factor Ts (Halothermothrix orenii (strain H 168 / OCM 544 / DSM 9562)).